Here is a 388-residue protein sequence, read N- to C-terminus: Interferon alpha/beta receptor 1b (388 aa).

Fibronectin type-III domains lie at 5–102 (LPQP…FCPD) and 109–211 (PPSR…TEGD). A helical membrane pass occupies residues 217 to 237 (IFLYFLVSMMVCFLLVLLSSY). The interval 308–357 (TAPPSELEQDSGRHIRQDSGDSGIYSTEGGSAQQGRSGGEPIRRDQEVDS) is disordered. Positions 317 to 326 (DSGRHIRQDS) are enriched in basic and acidic residues. The span at 331-342 (IYSTEGGSAQQG) shows a compositional bias: polar residues.

Belongs to the type II cytokine receptor family. In terms of assembly, heterodimer with IFNAR2; forming the receptor for type I interferon.

The protein resides in the cell membrane. Its subcellular location is the cytoplasm. It localises to the perinuclear region. Together with IFNAR2, forms the heterodimeric receptor for type I interferons (including interferons alpha, beta, epsilon, omega and kappa). Type I interferon binding activates the JAK-STAT signaling cascade, resulting in transcriptional activation or repression of interferon-regulated genes that encode the effectors of the interferon response. Mechanistically, type I interferon-binding brings the IFNAR1 and IFNAR2 subunits into close proximity with one another, driving their associated Janus kinases (JAKs) (TYK2 bound to IFNAR1 and JAK1 bound to IFNAR2) to cross-phosphorylate one another. The activated kinases phosphorylate specific tyrosine residues on the intracellular domains of IFNAR1 and IFNAR2, forming docking sites for the STAT transcription factors. STAT proteins are then phosphorylated by the JAKs, promoting their translocation into the nucleus to regulate expression of interferon-regulated genes. This is Interferon alpha/beta receptor 1b from Oncorhynchus mykiss (Rainbow trout).